The sequence spans 101 residues: MAKVALIQRELKREKLAAKYAAKYAELKAIASDAKRSDEEREAARLGLQKLPRNANPTRQRNRCEITGRPRGTFRQFGLARAKIRELAFAGDIPGVTKASW.

The segment at 32 to 67 (SDAKRSDEEREAARLGLQKLPRNANPTRQRNRCEIT) is disordered. The span at 33–44 (DAKRSDEEREAA) shows a compositional bias: basic and acidic residues.

This sequence belongs to the universal ribosomal protein uS14 family. As to quaternary structure, part of the 30S ribosomal subunit. Contacts proteins S3 and S10.

Binds 16S rRNA, required for the assembly of 30S particles and may also be responsible for determining the conformation of the 16S rRNA at the A site. The polypeptide is Small ribosomal subunit protein uS14 (Paracidovorax citrulli (strain AAC00-1) (Acidovorax citrulli)).